Consider the following 524-residue polypeptide: Cytosolic Fe-S cluster assembly factor NAR1 (524 aa).

[4Fe-4S] cluster is bound by residues C20, C52, C55, C58, C158, and C206. The disordered stretch occupies residues 362–388 (IRKRPTANGNDNSISLSSSINNQDNNN). Residues 369 to 388 (NGNDNSISLSSSINNQDNNN) show a composition bias toward low complexity. Positions 408 and 412 each coordinate [4Fe-4S] cluster. Residues 501–524 (SSISETHNGDSKNTIEQPVQFTTW) form a disordered region.

Belongs to the NARF family.

Functionally, component of the cytosolic Fe/S protein assembly machinery. Required for maturation of extramitochondrial Fe/S proteins. May play a role in the transfer of pre-assembled Fe/S clusters to target apoproteins. This Vanderwaltozyma polyspora (strain ATCC 22028 / DSM 70294 / BCRC 21397 / CBS 2163 / NBRC 10782 / NRRL Y-8283 / UCD 57-17) (Kluyveromyces polysporus) protein is Cytosolic Fe-S cluster assembly factor NAR1 (NAR1).